A 1230-amino-acid chain; its full sequence is MSALCWGRGAAGLKRALRPCGRPGLPGKEGTAGGVCGPRRSSSASPQEQDQDRRKDWGHVELLEVLQARVRQLQAESVSEVVVNRVDVARLPECGSGDGSLQPPRKVQMGAKDATPVPCGRWAKILEKDKRTQQMRMQRLKAKLQMPFQSGEFKALTRRLQVEPRLLSKQMAGCLEDCTRQAPESPWEEQLARLLQEAPGKLSLDVEQAPSGQHSQAQLSGQQQRLLAFFKCCLLTDQLPLAHHLLVVHHGQRQKRKLLTLDMYNAVMLGWARQGAFKELVYVLFMVKDAGLTPDLLSYAAALQCMGRQDQDAGTIERCLEQMSQEGLKLQALFTAVLLSEEDRATVLKAVHKVKPTFSLPPQLPPPVNTSKLLRDVYAKDGRVSYPKLHLPLKTLQCLFEKQLHMELASRVCVVSVEKPTLPSKEVKHARKTLKTLRDQWEKALCRALRETKNRLEREVYEGRFSLYPFLCLLDEREVVRMLLQVLQALPAQGESFTTLARELSARTFSRHVVQRQRVSGQVQALQNHYRKYLCLLASDAEVPEPCLPRQYWEELGAPEALREQPWPLPVQMELGKLLAEMLVQATQMPCSLDKPHRSSRLVPVLYHVYSFRNVQQIGILKPHPAYVQLLEKAAEPTLTFEAVDVPMLCPPLPWTSPHSGAFLLSPTKLMRTVEGATQHQELLETCPPTALHGALDALTQLGNCAWRVNGRVLDLVLQLFQAKGCPQLGVPAPPSEAPQPPEAHLPHSAAPARKAELRRELAHCQKVAREMHSLRAEALYRLSLAQHLRDRVFWLPHNMDFRGRTYPCPPHFNHLGSDVARALLEFAQGRPLGPHGLDWLKIHLVNLTGLKKREPLRKRLAFAEEVMDDILDSADQPLTGRKWWMGAEEPWQTLACCMEVANAVRASDPAAYVSHLPVHQDGSCNGLQHYAALGRDSVGAASVNLEPSDVPQDVYSGVAAQVEVFRRQDAQRGMRVAQVLEGFITRKVVKQTVMTVVYGVTRYGGRLQIEKRLRELSDFPQEFVWEASHYLVRQVFKSLQEMFSGTRAIQHWLTESARLISHMGSVVEWVTPLGVPVIQPYRLDSKVKQIGGGIQSITYTHNGDISRKPNTRKQKNGFPPNFIHSLDSSHMMLTALHCYRKGLTFVSVHDCYWTHAADVSVMNQVCREQFVRLHSEPILQDLSRFLVKRFCSEPQKILEASQLKETLQAVPKPGAFDLEQVKRSTYFFS.

The transit peptide at Met-1–Ser-41 directs the protein to the mitochondrion. Disordered regions lie at residues Arg-18–Lys-55, Gly-95–Thr-115, and Val-731–Ala-750. Residues Pro-732–Ala-744 are compositionally biased toward pro residues. The mediates interaction with TEFM stretch occupies residues Phe-802–Ser-1230. Active-site residues include Asp-922, Lys-991, and Asp-1151.

This sequence belongs to the phage and mitochondrial RNA polymerase family. As to quaternary structure, homodimer. Component of the mitochondrial transcription initiation complex, composed at least of TFB2M, TFAM and POLRMT. In this complex TFAM recruits POLRMT to the promoter whereas TFB2M induces structural changes in POLRMT to enable promoter opening and trapping of the DNA non-template strand. Upon metabolic stress, forms a complex composed of FOXO3, SIRT3 and mitochondrial RNA polymerase POLRMT; the complex is recruited to mtDNA in a SIRT3-dependent manner. Also forms a complex composed of FOXO3, SIRT3, TFAM and POLRMT. Interacts with TFB1M and TFB2M, leading to the stimulation of transcription. Interacts with TEFM. Interacts with MTRES1.

The protein resides in the mitochondrion. The enzyme catalyses RNA(n) + a ribonucleoside 5'-triphosphate = RNA(n+1) + diphosphate. Its function is as follows. DNA-dependent RNA polymerase catalyzes the transcription of mitochondrial DNA into RNA using the four ribonucleoside triphosphates as substrates. Component of the mitochondrial transcription initiation complex, composed at least of TFB2M, TFAM and POLRMT that is required for basal transcription of mitochondrial DNA. In this complex, TFAM recruits POLRMT to a specific promoter whereas TFB2M induces structural changes in POLRMT to enable promoter opening and trapping of the DNA non-template strand. Has DNA primase activity. Catalyzes the synthesis of short RNA primers that are necessary for the initiation of lagging-strand DNA synthesis from the origin of light-strand DNA replication (OriL). The sequence is that of DNA-directed RNA polymerase, mitochondrial from Homo sapiens (Human).